We begin with the raw amino-acid sequence, 706 residues long: Dual specificity calcium/calmodulin-dependent 3',5'-cyclic nucleotide phosphodiesterase 1C (706 aa).

An N-acetylmethionine modification is found at Met-1. Positions Glu-123–Arg-146 are calmodulin-binding. A PDEase domain is found at Val-151–Glu-528. The Proton donor role is filled by His-228. Zn(2+) is bound by residues His-232, His-268, Asp-269, and Asp-376. Asp-269 is a Mg(2+) binding site. 2 disordered regions span residues Leu-453–Ser-497 and Lys-524–Pro-655. Composition is skewed to polar residues over residues Glu-456–Ser-476 and Val-483–Ser-497. Composition is skewed to basic and acidic residues over residues Lys-524–Ser-554, Arg-580–Glu-597, and Asp-603–Lys-630. Polar residues predominate over residues Ala-638–Ile-647.

It belongs to the cyclic nucleotide phosphodiesterase family. PDE1 subfamily. In terms of assembly, homodimer. The cofactor is Zn(2+). Mg(2+) is required as a cofactor. As to expression, highly expressed in testis and at moderate levels in heart. In terms of tissue distribution, expressed at a moderate level in brain, the cerebellum, testis, heart and olfactory epithelium. Highly expressed in olfactory epithelium and at very low levels, if any, in other tissues. In the cochlea, expressed in the inner and outer hair cells (at protein level). In the brain, highly expressed in the neurons of the granule layer of the cerebellum, some Purkinje cells, the central amygdaloid nucleus, and the interpolar spinal trigem nucleus and, at moderate levels, in the glomerular and external plexiform layer of the olfactory bulb as well as in parts of the caudate-putamen and olfactory tubercle.

It is found in the lysosome. The catalysed reaction is a nucleoside 3',5'-cyclic phosphate + H2O = a nucleoside 5'-phosphate + H(+). It catalyses the reaction 3',5'-cyclic GMP + H2O = GMP + H(+). It carries out the reaction 3',5'-cyclic AMP + H2O = AMP + H(+). Its activity is regulated as follows. Type I PDE are activated by the binding of calmodulin in the presence of Ca(2+). Different splice variants may have different sensitivities to Ca(2+). With respect to regulation, exhibits a higher sensitivity to Ca(2+) stimulation than isoforms 1 and 2. Functionally, calmodulin-dependent cyclic nucleotide phosphodiesterase with a dual specificity for cAMP and cGMP, which are key regulators of many important physiological processes. Exhibits high affinity for both cAMP and cGMP. Modulates the amplitude and duration of the cAMP signal in sensory cilia in response to odorant stimulation, hence contributing to the generation of action potentials. Regulates smooth muscle cell proliferation. Regulates the stability of growth factor receptors, including PDGFRB. The chain is Dual specificity calcium/calmodulin-dependent 3',5'-cyclic nucleotide phosphodiesterase 1C from Mus musculus (Mouse).